Reading from the N-terminus, the 274-residue chain is Dermonecrotic toxin SdSicTox-betaIIB1bx (274 aa).

Residue His-5 is part of the active site. Residues Glu-25 and Asp-27 each coordinate Mg(2+). Catalysis depends on His-41, which acts as the Nucleophile. Intrachain disulfides connect Cys-45–Cys-51 and Cys-47–Cys-190. Asp-85 serves as a coordination point for Mg(2+).

This sequence belongs to the arthropod phospholipase D family. Class II subfamily. Requires Mg(2+) as cofactor. In terms of tissue distribution, expressed by the venom gland.

It is found in the secreted. It carries out the reaction an N-(acyl)-sphingosylphosphocholine = an N-(acyl)-sphingosyl-1,3-cyclic phosphate + choline. The catalysed reaction is an N-(acyl)-sphingosylphosphoethanolamine = an N-(acyl)-sphingosyl-1,3-cyclic phosphate + ethanolamine. It catalyses the reaction a 1-acyl-sn-glycero-3-phosphocholine = a 1-acyl-sn-glycero-2,3-cyclic phosphate + choline. The enzyme catalyses a 1-acyl-sn-glycero-3-phosphoethanolamine = a 1-acyl-sn-glycero-2,3-cyclic phosphate + ethanolamine. In terms of biological role, dermonecrotic toxins cleave the phosphodiester linkage between the phosphate and headgroup of certain phospholipids (sphingolipid and lysolipid substrates), forming an alcohol (often choline) and a cyclic phosphate. This toxin acts on sphingomyelin (SM). It may also act on ceramide phosphoethanolamine (CPE), lysophosphatidylcholine (LPC) and lysophosphatidylethanolamine (LPE), but not on lysophosphatidylserine (LPS), and lysophosphatidylglycerol (LPG). It acts by transphosphatidylation, releasing exclusively cyclic phosphate products as second products. Induces dermonecrosis, hemolysis, increased vascular permeability, edema, inflammatory response, and platelet aggregation. This chain is Dermonecrotic toxin SdSicTox-betaIIB1bx, found in Sicarius cf. damarensis (strain GJB-2008) (Six-eyed sand spider).